The chain runs to 285 residues: MPSRTALSPGVLSPTRPVPNWIARPEYVGKPAAQEGSEPWVQTPEVIEKMRVAGRIAAGALAEAGKAVAPGVTTDELDRIAHEYLVDNGAYPSTLGYKGFPKSCCTSLNEVICHGIPDSTVITDGDIVNIDVTAYIGGVHGDTNATFPAGDVADEHRLLVDRTREATMRAINTVKPGRALSVIGRVIESYANRFGYNVVRDFTGHGIGTTFHNGLVVLHYDQPAVETIMQPGMTFTIEPMINLGALDYEIWDDGWTVVTKDRKWTAQFEHTLLVTDTGVEILTCL.

Histidine 114 contacts substrate. Residues aspartate 131, aspartate 142, and histidine 205 each contribute to the a divalent metal cation site. Histidine 212 is a binding site for substrate. 2 residues coordinate a divalent metal cation: glutamate 238 and glutamate 269.

As to quaternary structure, monomer. The cofactor is Co(2+). Zn(2+) is required as a cofactor. Requires Mn(2+) as cofactor. It depends on Fe(2+) as a cofactor.

The enzyme catalyses Release of N-terminal amino acids, preferentially methionine, from peptides and arylamides.. Its activity is regulated as follows. Inhibited by bengamide derivatives and by various metalloform-selective inhibitors. In terms of biological role, removes the N-terminal methionine from nascent proteins. The N-terminal methionine is often cleaved when the second residue in the primary sequence is small and uncharged (Met-Ala-, Cys, Gly, Pro, Ser, Thr, or Val). Requires deformylation of the N(alpha)-formylated initiator methionine before it can be hydrolyzed. This chain is Methionine aminopeptidase 2, found in Mycobacterium tuberculosis (strain ATCC 25618 / H37Rv).